Here is a 380-residue protein sequence, read N- to C-terminus: UPF0754 membrane protein Bsph_0374 (380 aa).

A run of 2 helical transmembrane segments spans residues 1 to 21 (MDNF…IGGV) and 357 to 377 (MITV…GLIV).

The protein belongs to the UPF0754 family.

The protein resides in the cell membrane. This Lysinibacillus sphaericus (strain C3-41) protein is UPF0754 membrane protein Bsph_0374.